We begin with the raw amino-acid sequence, 350 residues long: Cobalt-precorrin-5B C(1)-methyltransferase (350 aa).

This sequence belongs to the CbiD family.

The catalysed reaction is Co-precorrin-5B + S-adenosyl-L-methionine = Co-precorrin-6A + S-adenosyl-L-homocysteine. It participates in cofactor biosynthesis; adenosylcobalamin biosynthesis; cob(II)yrinate a,c-diamide from sirohydrochlorin (anaerobic route): step 6/10. Functionally, catalyzes the methylation of C-1 in cobalt-precorrin-5B to form cobalt-precorrin-6A. This chain is Cobalt-precorrin-5B C(1)-methyltransferase, found in Syntrophotalea carbinolica (strain DSM 2380 / NBRC 103641 / GraBd1) (Pelobacter carbinolicus).